A 970-amino-acid chain; its full sequence is Protein translocase subunit SecA (970 aa).

ATP is bound by residues Gln99, 117–121 (GEGKT), and Asp631.

This sequence belongs to the SecA family. As to quaternary structure, monomer and homodimer. Part of the essential Sec protein translocation apparatus which comprises SecA, SecYEG and auxiliary proteins SecDF. Other proteins may also be involved.

It is found in the cell inner membrane. It localises to the cytoplasm. It catalyses the reaction ATP + H2O + cellular proteinSide 1 = ADP + phosphate + cellular proteinSide 2.. Its function is as follows. Part of the Sec protein translocase complex. Interacts with the SecYEG preprotein conducting channel. Has a central role in coupling the hydrolysis of ATP to the transfer of proteins into and across the cell membrane, serving as an ATP-driven molecular motor driving the stepwise translocation of polypeptide chains across the membrane. This chain is Protein translocase subunit SecA, found in Chlamydia caviae (strain ATCC VR-813 / DSM 19441 / 03DC25 / GPIC) (Chlamydophila caviae).